The primary structure comprises 138 residues: Ribosome-binding factor A (138 aa).

The tract at residues 117-138 (ERQNKPAASTEKPPVGSLDADL) is disordered.

Belongs to the RbfA family. As to quaternary structure, monomer. Binds 30S ribosomal subunits, but not 50S ribosomal subunits or 70S ribosomes.

It is found in the cytoplasm. In terms of biological role, one of several proteins that assist in the late maturation steps of the functional core of the 30S ribosomal subunit. Associates with free 30S ribosomal subunits (but not with 30S subunits that are part of 70S ribosomes or polysomes). Required for efficient processing of 16S rRNA. May interact with the 5'-terminal helix region of 16S rRNA. This chain is Ribosome-binding factor A, found in Acaryochloris marina (strain MBIC 11017).